The primary structure comprises 353 residues: MTDIITLENIDVTFKQGKQIVNAVKNVNLNVEKGDIFGVVGYSGAGKSTLVRTINLLQKPTSGTVKVNGTLLFADNKQQISNKELQKQRRSIGMIFQHFNLLNETTVVDNVAFALRHSSLSDKEIEEKALNLLKLVGLEDKAKFYPIQLSGGEQQRVAIARALANDPEILISDESTSALDPRTTNQILDLLKELNAKLGLTIVLITHEMDAVKRIANKIAIMEHGVIIEKGKLRDVYLRPKEELSRQFVGGSLAAIETLKAFNLGNLSPDQKLFQLVFSAANVTKSIILELYKELGLDVSMLYGNIEVLESEPVGTMFILAKGEPDKLDKVADYLKKENVEVTRIDERGIWND.

One can recognise an ABC transporter domain in the interval 7 to 249 (LENIDVTFKQ…PKEELSRQFV (243 aa)). Position 41 to 48 (41 to 48 (GYSGAGKS)) interacts with ATP.

Belongs to the ABC transporter superfamily. Methionine importer (TC 3.A.1.24) family. As to quaternary structure, the complex is composed of two ATP-binding proteins (MetN), two transmembrane proteins (MetI) and a solute-binding protein (MetQ).

Its subcellular location is the cell membrane. It catalyses the reaction L-methionine(out) + ATP + H2O = L-methionine(in) + ADP + phosphate + H(+). The enzyme catalyses D-methionine(out) + ATP + H2O = D-methionine(in) + ADP + phosphate + H(+). Functionally, part of the ABC transporter complex MetNIQ involved in methionine import. Responsible for energy coupling to the transport system. This chain is Methionine import ATP-binding protein MetN, found in Ligilactobacillus salivarius (strain UCC118) (Lactobacillus salivarius).